The following is a 276-amino-acid chain: Glutamate racemase (276 aa).

Residues 10 to 11 (DS) and 42 to 43 (YG) each bind substrate. Cysteine 74 (proton donor/acceptor) is an active-site residue. 75-76 (NT) contributes to the substrate binding site. Catalysis depends on cysteine 185, which acts as the Proton donor/acceptor. Position 186-187 (186-187 (TH)) interacts with substrate.

The protein belongs to the aspartate/glutamate racemases family.

The enzyme catalyses L-glutamate = D-glutamate. It participates in cell wall biogenesis; peptidoglycan biosynthesis. Functionally, provides the (R)-glutamate required for cell wall biosynthesis. This chain is Glutamate racemase, found in Levilactobacillus brevis (strain ATCC 367 / BCRC 12310 / CIP 105137 / JCM 1170 / LMG 11437 / NCIMB 947 / NCTC 947) (Lactobacillus brevis).